The primary structure comprises 2493 residues: MLFTMQFTTRSTVASPEQQHQHQQRSISYSDIELGLERISSRDSNGSSNFTHRAYPPPLSQQYDDTSTNSFHSSQPDITASSSTLSSRLVSANYSRPRFEHAHTQPPTPDQDRSSSGSGSGSGSRSYFPANSHSDSLPGPSTHSISPSFDEDELRQIMSHIPANQATSSSDGDVGKAVQSANHQDISPFLFQSENAAPFSSSHSNRTSVNPSAASTASPSTSAATRTRPRGGTNASQYNTLDTSFGSIDRPGLSSSRSQYSLRPQTPPSASTSTSTLNGSKDTHASAVKKTRNPFGFLKKKSSAHSNASSNHPTRHDIGSVSSLSSRYGPNAAANVNPMRPPAWLDNHCTLANSNSPSSASLRSHYHQPPASSNPPPWQNPLVSRADSTPSAMSLEDEVEAEHHLKKDPRKRIKGVRHHLAKTTKPGEDADSARDPAFAAQSQSIEQEVELSLDMNFDQLDDFVDTNAARQRLQGSITESASPSEHRSPNGSEAGVYRSPSPSQTPIAERQTSVTSTVESPSHASEASLAPSGSLRTPSRTTASTSTSSASTVLSDRLPSQVNMLPRNSVPRLSLAEMQNYQSLRKLSNNLIDMSQTQNPSAMGASYRRGSIAAAQAPVDAPQLGVAPRTDSELSDRKDSVVSTHSMRSNHSGISPKTSYANLPSVIQERQKPATALPSAANWTSSITRDKTANGHADHAYQFPPATEYQSNLLLSVRKSSASSGQEPSSSWMAPDSWAVQPDKMRDYLRDDNVGEEEDDDDDQHQARAALATDGKRRGSSSGISSTHASSMFRTSSTDPFKKTASLAGSRRGTDDSVDPLTALPPLPGSKSVDEAAANKVDVLQQTNNLAQSALVQQQSQSQNHHQPSPNVRPTSRGGAGAHMFASAGASAAAAAAGKLGLHRPSKHRMNARPNTAGSVGATRPSTTTLGSTLSAEDDTSINGSIRRDGHPLKRSATANTNNATGTLPRNHFIRVYKTDGTFATLSCSLVSTANEVQTILARKSLTTESAAYRLFVRDKGSERPLGISDKPSQLQRRRLIQAGYTENDGLEDMGRDDLSYLLRFVFRPDSVPTFDSESIGHSEHTFQHLDLHSRNLEMVPIFLYKHADWIVSLDLSGNPMSDLPLDFVQLCSSLRTLRLSNLALKRIPQSVRHSETLTHLDVSNNRIVELAHVSLDLIPELMSLKVQNNRLFDLPSYFSSISTLRNLNISNNRFEEFPKVICDVPSLVDLDVSFNSITELPAEIANLINLERFILAGNELEKLPDSMSELVSLRTIDLRRNKVQDVSSLLGLPRLQNIQAESNNIKSFEATLGPQLTQVELGRNPLSKVRIAALTTCDLTSLDLSSTNMTRLEEGLFPQLPALVKLTLDGNQLVVLPDTLGDLKRLEMLSCSNNLLATLPESIGDLKALKELLVHNNNLKTLPQTLWLCESLAHINLSSNLLESFPAVPDIRTDASVGDAAAAAGTSAVIAARKGSTSSSLTHRSNTGGANGNINLSTPSEVFVAPLSLSLQKLRLGDNRLGDDVFSVLSELTSLEVLNLSFNEIFEIPDFSLQTLTKLRELYISGNQLSTIPSDDLVVLQELRILHLNCNKLTTLPTELGKLKKLANLDVGNNVLKYNIANWHYDWNWNMNPELRYLNLSGNTRLEIKTKLSDMGFTRKSNISDFSRLTSLRMLGLMDVTMPLHSNATPDESDNRRVRTSLSQVNGMAYGIADALGKHDNLSVIDLVIPTFRKDEGECIFGLFDGRGHGAHVGSRIAHHLAEWSGHRLSWEFQKHQNEMTAEPVSVPDALRRAFLRLQKDYADALINDGSRKLSEAHAEAAADVTRSSAPAIAAASNKHDWRAGASAILAYVVDHTLYIANAGDALAVMSRNGGTAHLISNKHEPFDRAEIERIRSAEGWVSLRGYVNDMLDVSRSFGYFHLFPIVNAAPAVTTVQLTDSDEFVIIANRTLWQYVSYQTAVDIARTQRNDPMIAAQKLRDFAISYGAEESIMVMVISVGDLFYRSDQRNGGGLNFASYKNSDAIQKAGRRFREELPGDRTLARLDREVAPPIGQVALVFTDIKNSTSLWETNNGMQTAMRLHNYLLRRQLRTIGGYEVKTEGDAFMVSFPSVSAALLWCFTVQQQLLQEDWPREILDSEDGKEVYDQSGELIHRGLSVRMGIHWGRPVCEADPITRRMDYFGPMVNRAARISGAADGGQILASKDVIKELQGLLGTFDESSTAGGAGGEGENLEKTEEELDEDAFRLLNPNVSRDVVLLRRMGFGLSQLGERRLKGLETPEMLWLVYPKQLAGRLEQAKTDDAPDAPTAQVYEPTVQLLDIEDVKQVGMLCLRLEYLSNSTVCPGIFAAKDEADRSQPSTPLDDNGRNPIDGHGTAVPLLSHQARRKGVEAMLTMHPELLIYSIRDDATDEELAGILDQLTTRIQNAVSSLMLNMLRDKTANGTKELGVDPGVLELLMGLLSQPPPRASTSALSLPSPRTSPRNRLLELVP.

5 stretches are compositionally biased toward polar residues: residues 1–18, 42–51, 60–78, 129–147, and 197–210; these read MLFT…SPEQ, RDSNGSSNFT, SQQY…QPDI, PANS…SISP, and APFS…TSVN. Disordered stretches follow at residues 1-85, 99-148, 197-325, 355-444, 475-565, 616-660, 753-832, 854-882, and 904-967; these read MLFT…SSTL, FEHA…ISPS, APFS…SSLS, NSPS…QSQS, GSIT…VNML, QAPV…KTSY, NVGE…GSKS, ALVQ…GAGA, and RPSK…ATGT. The segment covering 211–233 has biased composition (low complexity); sequence PSAASTASPSTSAATRTRPRGGT. Composition is skewed to polar residues over residues 234–246 and 253–264; these read NASQ…TSFG and LSSSRSQYSLRP. Basic residues-rich tracts occupy residues 287–303 and 404–422; these read AVKK…KKSS and HLKK…HLAK. Residues 425 to 434 show a composition bias toward basic and acidic residues; the sequence is KPGEDADSAR. Positions 500 to 525 are enriched in polar residues; it reads PSPSQTPIAERQTSVTSTVESPSHAS. A compositionally biased stretch (low complexity) spans 534–555; sequence SLRTPSRTTASTSTSSASTVLS. Over residues 630 to 640 the composition is skewed to basic and acidic residues; that stretch reads TDSELSDRKDS. The segment covering 641–660 has biased composition (polar residues); the sequence is VVSTHSMRSNHSGISPKTSY. The span at 754 to 763 shows a compositional bias: acidic residues; that stretch reads VGEEEDDDDD. 2 stretches are compositionally biased toward low complexity: residues 780-791 and 854-870; these read SSSGISSTHASS and ALVQ…QPSP. Polar residues predominate over residues 913 to 935; it reads RPNTAGSVGATRPSTTTLGSTLS. In terms of domain architecture, Ras-associating spans 970-1072; it reads RNHFIRVYKT…LRFVFRPDSV (103 aa). LRR repeat units lie at residues 1086–1107, 1110–1132, 1134–1155, 1157–1178, 1181–1202, 1204–1225, 1227–1248, 1250–1271, 1273–1294, 1295–1316, 1317–1336, 1339–1360, 1363–1385, 1386–1407, 1409–1430, 1432–1453, 1511–1534, 1535–1556, 1559–1580, 1583–1605, 1606–1628, and 1635–1654; these read TFQH…LYKH, WIVS…VQLC, SLRT…VRHS, TLTH…SLDL, ELMS…FSSI, TLRN…ICDV, SLVD…IANL, NLER…MSEL, SLRT…LGLP, RLQN…LGPQ, LTQV…AALT, DLTS…LFPQ, ALVK…GDLK, RLEM…IGDL, ALKE…LWLC, SLAH…PDIR, SLQK…SELT, SLEV…SLQT, KLRE…DLVV, ELRI…GKLK, KLAN…HYDW, and ELRY…TKLS. The region spanning 1710 to 2000 is the PPM-type phosphatase domain; that stretch reads AYGIADALGK…ESIMVMVISV (291 aa). One can recognise a Guanylate cyclase domain in the interval 2058–2194; sequence ALVFTDIKNS…PMVNRAARIS (137 aa). 2 residues coordinate Mg(2+): D2063 and D2105. Disordered stretches follow at residues 2220 to 2241, 2354 to 2378, and 2467 to 2493; these read DESS…TEEE, EADR…HGTA, and PPRA…ELVP. Positions 2470–2485 are enriched in polar residues; the sequence is ASTSALSLPSPRTSPR.

Belongs to the adenylyl cyclase class-3 family. Mg(2+) is required as a cofactor.

The catalysed reaction is ATP = 3',5'-cyclic AMP + diphosphate. Plays essential roles in regulation of cellular metabolism by catalyzing the synthesis of a second messenger, cAMP. This chain is Adenylate cyclase (UAC1), found in Mycosarcoma maydis (Corn smut fungus).